We begin with the raw amino-acid sequence, 1431 residues long: DNA-directed RNA polymerase subunit beta' (1431 aa).

The Zn(2+) site is built by cysteine 66, cysteine 68, cysteine 81, and cysteine 84. The Mg(2+) site is built by aspartate 470, aspartate 472, and aspartate 474. Zn(2+) is bound by residues cysteine 813, cysteine 887, cysteine 894, and cysteine 897.

The protein belongs to the RNA polymerase beta' chain family. The RNAP catalytic core consists of 2 alpha, 1 beta, 1 beta' and 1 omega subunit. When a sigma factor is associated with the core the holoenzyme is formed, which can initiate transcription. Requires Mg(2+) as cofactor. Zn(2+) is required as a cofactor.

It catalyses the reaction RNA(n) + a ribonucleoside 5'-triphosphate = RNA(n+1) + diphosphate. In terms of biological role, DNA-dependent RNA polymerase catalyzes the transcription of DNA into RNA using the four ribonucleoside triphosphates as substrates. This chain is DNA-directed RNA polymerase subunit beta', found in Parabacteroides distasonis (strain ATCC 8503 / DSM 20701 / CIP 104284 / JCM 5825 / NCTC 11152).